An 80-amino-acid chain; its full sequence is RNA-binding protein KhpA (80 aa).

The 48-residue stretch at 33-80 folds into the KH domain; that stretch reads GRTVEVHVHPDDLGKVIGRGGRTATALRTLVAGIGGRGIRVDVVDTDQ.

Belongs to the KhpA RNA-binding protein family.

The protein localises to the cytoplasm. In terms of biological role, a probable RNA-binding protein. This chain is RNA-binding protein KhpA, found in Mycobacterium bovis (strain ATCC BAA-935 / AF2122/97).